The following is a 344-amino-acid chain: N-acetyl-gamma-glutamyl-phosphate reductase (344 aa).

Cysteine 148 is an active-site residue.

The protein belongs to the NAGSA dehydrogenase family. Type 1 subfamily.

It is found in the cytoplasm. The catalysed reaction is N-acetyl-L-glutamate 5-semialdehyde + phosphate + NADP(+) = N-acetyl-L-glutamyl 5-phosphate + NADPH + H(+). It participates in amino-acid biosynthesis; L-arginine biosynthesis; N(2)-acetyl-L-ornithine from L-glutamate: step 3/4. Functionally, catalyzes the NADPH-dependent reduction of N-acetyl-5-glutamyl phosphate to yield N-acetyl-L-glutamate 5-semialdehyde. This chain is N-acetyl-gamma-glutamyl-phosphate reductase, found in Clostridium botulinum (strain Eklund 17B / Type B).